Reading from the N-terminus, the 371-residue chain is Queuine tRNA-ribosyltransferase (371 aa).

The Proton acceptor role is filled by Asp-89. Substrate contacts are provided by residues 89-93 (DSGGF), Asp-143, Gln-185, and Gly-212. The interval 243–249 (GVGKPED) is RNA binding. Residue Asp-262 is the Nucleophile of the active site. Residues 267–271 (TRNAR) are RNA binding; important for wobble base 34 recognition. The Zn(2+) site is built by Cys-300, Cys-302, Cys-305, and His-331.

This sequence belongs to the queuine tRNA-ribosyltransferase family. Homodimer. Within each dimer, one monomer is responsible for RNA recognition and catalysis, while the other monomer binds to the replacement base PreQ1. It depends on Zn(2+) as a cofactor.

It catalyses the reaction 7-aminomethyl-7-carbaguanine + guanosine(34) in tRNA = 7-aminomethyl-7-carbaguanosine(34) in tRNA + guanine. Its pathway is tRNA modification; tRNA-queuosine biosynthesis. Functionally, catalyzes the base-exchange of a guanine (G) residue with the queuine precursor 7-aminomethyl-7-deazaguanine (PreQ1) at position 34 (anticodon wobble position) in tRNAs with GU(N) anticodons (tRNA-Asp, -Asn, -His and -Tyr). Catalysis occurs through a double-displacement mechanism. The nucleophile active site attacks the C1' of nucleotide 34 to detach the guanine base from the RNA, forming a covalent enzyme-RNA intermediate. The proton acceptor active site deprotonates the incoming PreQ1, allowing a nucleophilic attack on the C1' of the ribose to form the product. After dissociation, two additional enzymatic reactions on the tRNA convert PreQ1 to queuine (Q), resulting in the hypermodified nucleoside queuosine (7-(((4,5-cis-dihydroxy-2-cyclopenten-1-yl)amino)methyl)-7-deazaguanosine). The polypeptide is Queuine tRNA-ribosyltransferase (Azotobacter vinelandii (strain DJ / ATCC BAA-1303)).